The primary structure comprises 329 residues: GTP 3',8-cyclase (329 aa).

The 227-residue stretch at 8-234 (AFARKFYYLR…QLRQRSDGPA (227 aa)) folds into the Radical SAM core domain. Residue arginine 17 participates in GTP binding. 2 residues coordinate [4Fe-4S] cluster: cysteine 24 and cysteine 28. Tyrosine 30 contributes to the S-adenosyl-L-methionine binding site. Cysteine 31 serves as a coordination point for [4Fe-4S] cluster. Arginine 68 serves as a coordination point for GTP. Glycine 72 lines the S-adenosyl-L-methionine pocket. Residue threonine 99 coordinates GTP. Serine 123 contributes to the S-adenosyl-L-methionine binding site. Lysine 160 is a GTP binding site. Methionine 194 contributes to the S-adenosyl-L-methionine binding site. Positions 257 and 260 each coordinate [4Fe-4S] cluster. Position 262–264 (262–264 (RLR)) interacts with GTP. Cysteine 274 serves as a coordination point for [4Fe-4S] cluster.

Belongs to the radical SAM superfamily. MoaA family. In terms of assembly, monomer and homodimer. The cofactor is [4Fe-4S] cluster.

The enzyme catalyses GTP + AH2 + S-adenosyl-L-methionine = (8S)-3',8-cyclo-7,8-dihydroguanosine 5'-triphosphate + 5'-deoxyadenosine + L-methionine + A + H(+). It functions in the pathway cofactor biosynthesis; molybdopterin biosynthesis. Catalyzes the cyclization of GTP to (8S)-3',8-cyclo-7,8-dihydroguanosine 5'-triphosphate. The polypeptide is GTP 3',8-cyclase (Escherichia coli O127:H6 (strain E2348/69 / EPEC)).